Reading from the N-terminus, the 190-residue chain is Small ribosomal subunit protein uS5 (190 aa).

Residues 22-85 (FVDKLVHINR…ESAKRNLTRV (64 aa)) form the S5 DRBM domain.

The protein belongs to the universal ribosomal protein uS5 family. In terms of assembly, part of the 30S ribosomal subunit. Contacts proteins S4 and S8.

Functionally, with S4 and S12 plays an important role in translational accuracy. Located at the back of the 30S subunit body where it stabilizes the conformation of the head with respect to the body. The chain is Small ribosomal subunit protein uS5 from Rhodopseudomonas palustris (strain BisB18).